The chain runs to 177 residues: Transmembrane protein 275 (177 aa).

The segment at 1–20 (MPQAKKSTETLAPAPPGRSR) is disordered. Transmembrane regions (helical) follow at residues 36 to 56 (GLCV…AAFL) and 63 to 83 (LVVG…CCVC). The interval 113–177 (ESSERTAQDT…LNFPRDPAAS (65 aa)) is disordered. Over residues 128-161 (SPAASAASSGRSSPGPGLFALDPPAPATAAPYLP) the composition is skewed to low complexity.

It localises to the membrane. The polypeptide is Transmembrane protein 275 (Mus musculus (Mouse)).